A 280-amino-acid chain; its full sequence is Putative pyruvate, phosphate dikinase regulatory protein (280 aa).

158 to 165 (GVSRTSKT) contributes to the ADP binding site.

The protein belongs to the pyruvate, phosphate/water dikinase regulatory protein family. PDRP subfamily.

It carries out the reaction N(tele)-phospho-L-histidyl/L-threonyl-[pyruvate, phosphate dikinase] + ADP = N(tele)-phospho-L-histidyl/O-phospho-L-threonyl-[pyruvate, phosphate dikinase] + AMP + H(+). The enzyme catalyses N(tele)-phospho-L-histidyl/O-phospho-L-threonyl-[pyruvate, phosphate dikinase] + phosphate + H(+) = N(tele)-phospho-L-histidyl/L-threonyl-[pyruvate, phosphate dikinase] + diphosphate. In terms of biological role, bifunctional serine/threonine kinase and phosphorylase involved in the regulation of the pyruvate, phosphate dikinase (PPDK) by catalyzing its phosphorylation/dephosphorylation. The sequence is that of Putative pyruvate, phosphate dikinase regulatory protein from Lactobacillus johnsonii (strain CNCM I-12250 / La1 / NCC 533).